Consider the following 137-residue polypeptide: Small ribosomal subunit protein uS12 (137 aa).

Disordered regions lie at residues 1 to 21 and 34 to 57; these read MPTI…KSDS and VHTK…TPKK. A 3-methylthioaspartic acid modification is found at Asp102.

Belongs to the universal ribosomal protein uS12 family. As to quaternary structure, part of the 30S ribosomal subunit. Contacts proteins S8 and S17. May interact with IF1 in the 30S initiation complex.

With S4 and S5 plays an important role in translational accuracy. In terms of biological role, interacts with and stabilizes bases of the 16S rRNA that are involved in tRNA selection in the A site and with the mRNA backbone. Located at the interface of the 30S and 50S subunits, it traverses the body of the 30S subunit contacting proteins on the other side and probably holding the rRNA structure together. The combined cluster of proteins S8, S12 and S17 appears to hold together the shoulder and platform of the 30S subunit. This chain is Small ribosomal subunit protein uS12, found in Streptococcus uberis (strain ATCC BAA-854 / 0140J).